The sequence spans 284 residues: MSASSLFNLPLIRLRSLALSSSFSSFRFAHRPLSSISPRKLPNFRAFSGTAMTDTKDAGMDAVQRRLMFEDECILVDETDRVVGHDSKYNCHLMENIEAKNLLHRAFSVFLFNSKYELLLQQRSNTKVTFPLVWTNTCCSHPLYRESELIQDNALGVRNAAQRKLLDELGIVAEDVPVDEFTPLGRMLYKAPSDGKWGEHELDYLLFIVRDVKVQPNPDEVAEIKYVSREELKELVKKADAGEEGLKLSPWFRLVVDNFLMKWWDHVEKGTLVEAIDMKTIHKL.

The transit peptide at 1–45 (MSASSLFNLPLIRLRSLALSSSFSSFRFAHRPLSSISPRKLPNFR) directs the protein to the chloroplast. A46 carries the post-translational modification N-acetylalanine. K88 is a binding site for substrate. Mg(2+)-binding residues include H92 and H104. Positions 102–254 (LLHRAFSVFL…GLKLSPWFRL (153 aa)) constitute a Nudix hydrolase domain. Residues R123 and K127 each contribute to the substrate site. The active site involves C139. S140 is a binding site for substrate. Positions 140–170 (SHPLYRESELIQDNALGVRNAAQRKLLDELG) match the Nudix box motif. Mg(2+) contacts are provided by E199 and E201. Residue E201 is part of the active site.

This sequence belongs to the IPP isomerase type 1 family. Mg(2+) is required as a cofactor.

It localises to the plastid. It is found in the chloroplast. The catalysed reaction is isopentenyl diphosphate = dimethylallyl diphosphate. It functions in the pathway isoprenoid biosynthesis; dimethylallyl diphosphate biosynthesis; dimethylallyl diphosphate from isopentenyl diphosphate: step 1/1. It participates in porphyrin-containing compound metabolism; chlorophyll biosynthesis. Catalyzes the 1,3-allylic rearrangement of the homoallylic substrate isopentenyl (IPP) to its highly electrophilic allylic isomer, dimethylallyl diphosphate (DMAPP). This Arabidopsis thaliana (Mouse-ear cress) protein is Isopentenyl-diphosphate Delta-isomerase II, chloroplastic (IPP2).